A 156-amino-acid polypeptide reads, in one-letter code: Probable cyclic pyranopterin monophosphate synthase (156 aa).

Residues 74 to 76 (LCH) and 110 to 111 (ME) each bind substrate. Residue D125 is part of the active site.

This sequence belongs to the MoaC family. Homohexamer; trimer of dimers.

The catalysed reaction is (8S)-3',8-cyclo-7,8-dihydroguanosine 5'-triphosphate = cyclic pyranopterin phosphate + diphosphate. It functions in the pathway cofactor biosynthesis; molybdopterin biosynthesis. Catalyzes the conversion of (8S)-3',8-cyclo-7,8-dihydroguanosine 5'-triphosphate to cyclic pyranopterin monophosphate (cPMP). The chain is Probable cyclic pyranopterin monophosphate synthase from Thermococcus onnurineus (strain NA1).